The sequence spans 176 residues: Ribosome maturation factor RimM (176 aa).

Positions 97–176 (DSEFYHRDLI…QILVDWDPDF (80 aa)) constitute a PRC barrel domain.

This sequence belongs to the RimM family. As to quaternary structure, binds ribosomal protein uS19.

It is found in the cytoplasm. An accessory protein needed during the final step in the assembly of 30S ribosomal subunit, possibly for assembly of the head region. Essential for efficient processing of 16S rRNA. May be needed both before and after RbfA during the maturation of 16S rRNA. It has affinity for free ribosomal 30S subunits but not for 70S ribosomes. The polypeptide is Ribosome maturation factor RimM (Shewanella frigidimarina (strain NCIMB 400)).